The primary structure comprises 387 residues: 3-ketoacyl-CoA thiolase (387 aa).

Cys91 (acyl-thioester intermediate) is an active-site residue. Active-site proton acceptor residues include His343 and Cys373.

It belongs to the thiolase-like superfamily. Thiolase family. In terms of assembly, heterotetramer of two alpha chains (FadB) and two beta chains (FadA).

Its subcellular location is the cytoplasm. It carries out the reaction an acyl-CoA + acetyl-CoA = a 3-oxoacyl-CoA + CoA. It participates in lipid metabolism; fatty acid beta-oxidation. In terms of biological role, catalyzes the final step of fatty acid oxidation in which acetyl-CoA is released and the CoA ester of a fatty acid two carbons shorter is formed. The protein is 3-ketoacyl-CoA thiolase of Serratia proteamaculans (strain 568).